Reading from the N-terminus, the 413-residue chain is Serine/threonine transporter SstT (413 aa).

9 consecutive transmembrane segments (helical) span residues 21 to 41, 61 to 81, 89 to 109, 146 to 166, 189 to 209, 224 to 244, 305 to 325, 337 to 357, and 363 to 383; these read IGLLLGIIFALVSPSLESALG, SVAPILVFVLVIAAIANKKVG, IIYLYLIGTFLSALTAVFASF, ITALFNANFIGILAWAIGLGI, IVHFIISFAPIGVFGLVASTL, LAVLVGSMLFVAFVINPIIVF, MGGAAITITVLTLAAVFTLGI, LVASICACGASGVAGGSLLLI, and LFGISNDIAAQVIGVGFIIGV.

The protein belongs to the dicarboxylate/amino acid:cation symporter (DAACS) (TC 2.A.23) family.

Its subcellular location is the cell inner membrane. It carries out the reaction L-serine(in) + Na(+)(in) = L-serine(out) + Na(+)(out). The enzyme catalyses L-threonine(in) + Na(+)(in) = L-threonine(out) + Na(+)(out). Involved in the import of serine and threonine into the cell, with the concomitant import of sodium (symport system). The polypeptide is Serine/threonine transporter SstT (Mannheimia succiniciproducens (strain KCTC 0769BP / MBEL55E)).